Reading from the N-terminus, the 346-residue chain is Uroporphyrinogen decarboxylase (346 aa).

Substrate-binding positions include Arg26 to Arg30, Asp76, Tyr153, Ser208, and His323.

Belongs to the uroporphyrinogen decarboxylase family. Homodimer.

It is found in the cytoplasm. It carries out the reaction uroporphyrinogen III + 4 H(+) = coproporphyrinogen III + 4 CO2. The protein operates within porphyrin-containing compound metabolism; protoporphyrin-IX biosynthesis; coproporphyrinogen-III from 5-aminolevulinate: step 4/4. Its function is as follows. Catalyzes the decarboxylation of four acetate groups of uroporphyrinogen-III to yield coproporphyrinogen-III. This is Uroporphyrinogen decarboxylase from Prochlorococcus marinus (strain MIT 9301).